A 377-amino-acid polypeptide reads, in one-letter code: Succinyl-diaminopimelate desuccinylase (377 aa).

Histidine 68 provides a ligand contact to Zn(2+). Aspartate 70 is an active-site residue. Aspartate 101 provides a ligand contact to Zn(2+). The active-site Proton acceptor is the glutamate 135. Zn(2+) is bound by residues glutamate 136, glutamate 164, and histidine 350.

It belongs to the peptidase M20A family. DapE subfamily. As to quaternary structure, homodimer. Zn(2+) serves as cofactor. Co(2+) is required as a cofactor.

The enzyme catalyses N-succinyl-(2S,6S)-2,6-diaminopimelate + H2O = (2S,6S)-2,6-diaminopimelate + succinate. Its pathway is amino-acid biosynthesis; L-lysine biosynthesis via DAP pathway; LL-2,6-diaminopimelate from (S)-tetrahydrodipicolinate (succinylase route): step 3/3. Its function is as follows. Catalyzes the hydrolysis of N-succinyl-L,L-diaminopimelic acid (SDAP), forming succinate and LL-2,6-diaminopimelate (DAP), an intermediate involved in the bacterial biosynthesis of lysine and meso-diaminopimelic acid, an essential component of bacterial cell walls. In Aliivibrio fischeri (strain MJ11) (Vibrio fischeri), this protein is Succinyl-diaminopimelate desuccinylase.